Consider the following 238-residue polypeptide: Protein A47 (238 aa).

It belongs to the orthopoxvirus A47 protein family.

This chain is Protein A47, found in Vaccinia virus (strain Ankara) (VACV).